Consider the following 434-residue polypeptide: Histidinol dehydrogenase (434 aa).

Positions 242, 264, and 267 each coordinate substrate. Residues Gln-264 and His-267 each contribute to the Zn(2+) site. Residues Glu-332 and His-333 each act as proton acceptor in the active site. Residues His-333, Asp-366, Glu-420, and His-425 each coordinate substrate. Asp-366 contributes to the Zn(2+) binding site. His-425 serves as a coordination point for Zn(2+).

Belongs to the histidinol dehydrogenase family. It depends on Zn(2+) as a cofactor.

The catalysed reaction is L-histidinol + 2 NAD(+) + H2O = L-histidine + 2 NADH + 3 H(+). Its pathway is amino-acid biosynthesis; L-histidine biosynthesis; L-histidine from 5-phospho-alpha-D-ribose 1-diphosphate: step 9/9. Catalyzes the sequential NAD-dependent oxidations of L-histidinol to L-histidinaldehyde and then to L-histidine. The polypeptide is Histidinol dehydrogenase (Desulfotalea psychrophila (strain LSv54 / DSM 12343)).